A 116-amino-acid polypeptide reads, in one-letter code: Ribosome-binding factor A (116 aa).

It belongs to the RbfA family. In terms of assembly, monomer. Binds 30S ribosomal subunits, but not 50S ribosomal subunits or 70S ribosomes.

Its subcellular location is the cytoplasm. Its function is as follows. One of several proteins that assist in the late maturation steps of the functional core of the 30S ribosomal subunit. Associates with free 30S ribosomal subunits (but not with 30S subunits that are part of 70S ribosomes or polysomes). Required for efficient processing of 16S rRNA. May interact with the 5'-terminal helix region of 16S rRNA. This chain is Ribosome-binding factor A, found in Staphylococcus epidermidis (strain ATCC 35984 / DSM 28319 / BCRC 17069 / CCUG 31568 / BM 3577 / RP62A).